The primary structure comprises 424 residues: ATP-sensitive inward rectifier potassium channel 8 (424 aa).

The Cytoplasmic portion of the chain corresponds to Met1–Trp69. Position 6 is a phosphoserine (Ser6). The chain crosses the membrane as a helical span at residues Arg70–Val94. The Extracellular portion of the chain corresponds to Ala95 to Ser126. Residues Phe127 to Gln138 constitute an intramembrane region (helical; Pore-forming). Positions Val139–Gly145 form an intramembrane region, pore-forming. The Selectivity filter motif lies at Thr140–Gly145. At Arg146–Leu154 the chain is on the extracellular side. Residues Ala155 to Cys176 form a helical membrane-spanning segment. The Cytoplasmic portion of the chain corresponds to Ile177–Ser424. The interval Glu373–Lys409 is disordered. The segment covering Arg387–Ser404 has biased composition (low complexity).

The protein belongs to the inward rectifier-type potassium channel (TC 1.A.2.1) family. KCNJ8 subfamily. In terms of assembly, interacts with ABCC9.

Its subcellular location is the membrane. The enzyme catalyses K(+)(in) = K(+)(out). Inward rectifier potassium channels are characterized by a greater tendency to allow potassium to flow into the cell rather than out of it. Their voltage dependence is regulated by the concentration of extracellular potassium; as external potassium is raised, the voltage range of the channel opening shifts to more positive voltages. The inward rectification is mainly due to the blockage of outward current by internal magnesium. This channel is activated by internal ATP and can be blocked by external barium. Can form a sulfonylurea-sensitive but ATP-insensitive potassium channel with ABCC9. The chain is ATP-sensitive inward rectifier potassium channel 8 (Kcnj8) from Mus musculus (Mouse).